The following is a 331-amino-acid chain: Holliday junction branch migration complex subunit RuvB (331 aa).

Residues 1–186 (MAKTMMQDRL…FGIVQRLEFY (186 aa)) are large ATPase domain (RuvB-L). ATP contacts are provided by residues I25, R26, G67, K70, T71, T72, 133–135 (EDF), R176, Y186, and R223. T71 is a Mg(2+) binding site. A small ATPAse domain (RuvB-S) region spans residues 187-257 (NIADLTTIVS…IAGSALDMLA (71 aa)). The interval 260-331 (RRGLDHLDRR…LTQMAIDQMV (72 aa)) is head domain (RuvB-H). Residues R296, R315, and R320 each coordinate DNA.

Belongs to the RuvB family. As to quaternary structure, homohexamer. Forms an RuvA(8)-RuvB(12)-Holliday junction (HJ) complex. HJ DNA is sandwiched between 2 RuvA tetramers; dsDNA enters through RuvA and exits via RuvB. An RuvB hexamer assembles on each DNA strand where it exits the tetramer. Each RuvB hexamer is contacted by two RuvA subunits (via domain III) on 2 adjacent RuvB subunits; this complex drives branch migration. In the full resolvosome a probable DNA-RuvA(4)-RuvB(12)-RuvC(2) complex forms which resolves the HJ.

Its subcellular location is the cytoplasm. The catalysed reaction is ATP + H2O = ADP + phosphate + H(+). In terms of biological role, the RuvA-RuvB-RuvC complex processes Holliday junction (HJ) DNA during genetic recombination and DNA repair, while the RuvA-RuvB complex plays an important role in the rescue of blocked DNA replication forks via replication fork reversal (RFR). RuvA specifically binds to HJ cruciform DNA, conferring on it an open structure. The RuvB hexamer acts as an ATP-dependent pump, pulling dsDNA into and through the RuvAB complex. RuvB forms 2 homohexamers on either side of HJ DNA bound by 1 or 2 RuvA tetramers; 4 subunits per hexamer contact DNA at a time. Coordinated motions by a converter formed by DNA-disengaged RuvB subunits stimulates ATP hydrolysis and nucleotide exchange. Immobilization of the converter enables RuvB to convert the ATP-contained energy into a lever motion, pulling 2 nucleotides of DNA out of the RuvA tetramer per ATP hydrolyzed, thus driving DNA branch migration. The RuvB motors rotate together with the DNA substrate, which together with the progressing nucleotide cycle form the mechanistic basis for DNA recombination by continuous HJ branch migration. Branch migration allows RuvC to scan DNA until it finds its consensus sequence, where it cleaves and resolves cruciform DNA. This chain is Holliday junction branch migration complex subunit RuvB, found in Psychrobacter arcticus (strain DSM 17307 / VKM B-2377 / 273-4).